The sequence spans 130 residues: Small ribosomal subunit protein uS11 (130 aa).

It belongs to the universal ribosomal protein uS11 family. In terms of assembly, part of the 30S ribosomal subunit. Interacts with proteins S7 and S18. Binds to IF-3.

Located on the platform of the 30S subunit, it bridges several disparate RNA helices of the 16S rRNA. Forms part of the Shine-Dalgarno cleft in the 70S ribosome. The polypeptide is Small ribosomal subunit protein uS11 (Dehalococcoides mccartyi (strain ATCC BAA-2266 / KCTC 15142 / 195) (Dehalococcoides ethenogenes (strain 195))).